Consider the following 713-residue polypeptide: Ribosomal RNA large subunit methyltransferase K/L (713 aa).

Positions 43-154 (LAYRITLWTR…NGVITIAMNF (112 aa)) constitute a THUMP domain.

This sequence belongs to the methyltransferase superfamily. RlmKL family.

It is found in the cytoplasm. The enzyme catalyses guanosine(2445) in 23S rRNA + S-adenosyl-L-methionine = N(2)-methylguanosine(2445) in 23S rRNA + S-adenosyl-L-homocysteine + H(+). It carries out the reaction guanosine(2069) in 23S rRNA + S-adenosyl-L-methionine = N(2)-methylguanosine(2069) in 23S rRNA + S-adenosyl-L-homocysteine + H(+). Functionally, specifically methylates the guanine in position 2445 (m2G2445) and the guanine in position 2069 (m7G2069) of 23S rRNA. This is Ribosomal RNA large subunit methyltransferase K/L from Shewanella sp. (strain ANA-3).